A 285-amino-acid chain; its full sequence is UPF0354 protein SACOL1793 (285 aa).

The protein belongs to the UPF0354 family.

The chain is UPF0354 protein SACOL1793 from Staphylococcus aureus (strain COL).